Reading from the N-terminus, the 289-residue chain is Probable signal peptidase I (289 aa).

The Cytoplasmic portion of the chain corresponds to 1–53 (MTETTDSVPEPPSDADQLQPKVSICGLDMPAEVSETAAEAAIGVSEPKKRSAL). Residues 54-74 (WEFAILAVIAIGLYYVMLTFV) form a helical membrane-spanning segment. The Extracellular portion of the chain corresponds to 75 to 289 (ARPYLIPSES…VGSVNSQQGQ (215 aa)). Active-site residues include Ser-84 and Lys-162.

Belongs to the peptidase S26 family.

The protein localises to the cell membrane. The catalysed reaction is Cleavage of hydrophobic, N-terminal signal or leader sequences from secreted and periplasmic proteins.. This chain is Probable signal peptidase I (lepB), found in Mycobacterium leprae (strain TN).